Reading from the N-terminus, the 931-residue chain is Protocadherin gamma-B2 (931 aa).

The signal sequence occupies residues 1–30 (MKASSGRCGLVRWLQVLLPFLLSLFPGALP). Cadherin domains follow at residues 31 to 133 (VQIR…TPLF), 134 to 242 (KQTK…PPVF), 243 to 347 (SQDV…APEV), 348 to 452 (IVTS…APVF), 453 to 562 (QQTS…APRV), and 570 to 675 (DGSA…LPDL). Residues 31-691 (VQIRYSIPEE…SDPQAELQFY (661 aa)) lie on the Extracellular side of the membrane. N-linked (GlcNAc...) asparagine glycans are attached at residues Asn-419 and Asn-545. Residues 692-712 (LVVALALISVLFFLAVILAIS) traverse the membrane as a helical segment. Residues 713 to 931 (LRLRRSSRSD…KKKSGKKEKK (219 aa)) lie on the Cytoplasmic side of the membrane. Disordered stretches follow at residues 814–840 (DWRFSQAQRPGTSGSQNGDDTGTWPNN) and 901–931 (ATLTNAAGKRDGKAPAGGNGNKKKSGKKEKK). The segment covering 815–840 (WRFSQAQRPGTSGSQNGDDTGTWPNN) has biased composition (polar residues). A compositionally biased stretch (basic residues) spans 921 to 931 (NKKKSGKKEKK).

Its subcellular location is the cell membrane. Functionally, potential calcium-dependent cell-adhesion protein. May be involved in the establishment and maintenance of specific neuronal connections in the brain. The chain is Protocadherin gamma-B2 (PCDHGB2) from Pan troglodytes (Chimpanzee).